Here is a 525-residue protein sequence, read N- to C-terminus: MTTFRELGLSDSLLQSVESMGFEEATPIQAETIPHALQGKDIIGQAQTGTGKTAAFGLPLLDKVDTHKESVQGIVIAPTRELAIQVGEELYKIGKHKRVRILPIYGGQDINRQIRALKKHPHIIVGTPGRILDHINRKTLRLQNVETVVLDEADEMLNMGFIEDIEAILTDVPETHQTLLFSATMPDPIRRIAERFMTEPQHIKVKAKEVTMPNIQQFYLEVQEKKKFDVLTRLLDIQSPELAIVFGRTKRRVDELSEALNLRGYAAEGIHGDLTQAKRMSVLRKFKEGSIEVLVATDVAARGLDISGVTHVYNFDIPQDPESYVHRIGRTGRAGKKGIAMLFVTPRESGQLKNIERTTKRKMDRMDAPTLDEALEGQQRLIAEKLQNTIENENLAYYKRIAEEMLEENDSVTVVAAALKMMTKEPDTTPIALTSEPPVVARGGGSKKRGGNGGGYRDGNRNRSRDGRGGDGRNRDRNRDGRNRDGNRDRNRDGGNRGRRGEGQGRPGSSNGRGERKHHSRKPQA.

The short motif at 2–30 (TTFRELGLSDSLLQSVESMGFEEATPIQA) is the Q motif element. Residues 33–203 (IPHALQGKDI…ERFMTEPQHI (171 aa)) enclose the Helicase ATP-binding domain. ATP is bound at residue 46 to 53 (AQTGTGKT). The DEAD box signature appears at 151–154 (DEAD). The region spanning 214-374 (NIQQFYLEVQ…RMDAPTLDEA (161 aa)) is the Helicase C-terminal domain. Residues 428–525 (TTPIALTSEP…RKHHSRKPQA (98 aa)) form a disordered region. Basic and acidic residues predominate over residues 458–503 (DGNRNRSRDGRGGDGRNRDRNRDGRNRDGNRDRNRDGGNRGRRGEG). A compositionally biased stretch (basic residues) spans 515–525 (ERKHHSRKPQA).

Belongs to the DEAD box helicase family. CshA subfamily. As to quaternary structure, oligomerizes, may be a member of the RNA degradosome.

It localises to the cytoplasm. It catalyses the reaction ATP + H2O = ADP + phosphate + H(+). Functionally, DEAD-box RNA helicase possibly involved in RNA degradation. Unwinds dsRNA in both 5'- and 3'-directions, has RNA-dependent ATPase activity. The polypeptide is DEAD-box ATP-dependent RNA helicase CshA (Bacillus cereus (strain ATCC 10987 / NRS 248)).